Consider the following 438-residue polypeptide: Protein translocase subunit SecY (438 aa).

A helical transmembrane segment spans residues 1 to 43 (MKIKPILELIPEVKRPLKGVSFKEKIQWTGLVLILYFILGTID). Topologically, residues 44–54 (IYMGGAEMPAM) are extracellular. An intramembrane region (helical) is located at residues 55 to 62 (FAFWQTVT). Residues 55–83 (FAFWQTVTASKMGTLITLGIGPIVTAGII) form a discontinuously helical membrane-spanning segment. Residues 63–74 (ASKMGTLITLGI) lie within the membrane without spanning it. The helical intramembrane region spans 75–83 (GPIVTAGII). At 84–104 (MQLLVGSELISLDLSKPMNRA) the chain is on the cytoplasmic side. The helical transmembrane segment at 105–129 (LFQGLQKLFGIFLCFLEAVMFVGAG) threads the bilayer. The Extracellular segment spans residues 130-136 (AFGVVNS). Residues 137–161 (TLALILVLQLALGAILVIYLDEIVS) traverse the membrane as a helical segment. Topologically, residues 162–167 (RYGIGS) are cytoplasmic. A helical transmembrane segment spans residues 168 to 186 (GIGLFIAAGVAQTIFVGAF). Residues 187–209 (GAEGYLWKFFSAMSVGSLGIAFE) lie on the Extracellular side of the membrane. The chain crosses the membrane as a helical span at residues 210 to 231 (YILPILSTLFVFLVVVYVESIR). The Cytoplasmic segment spans residues 232 to 256 (VEIPLAHGRVKGAVGKYPIKFIYVS). Residues 257 to 278 (NLPVILAAALFANIQLWGMFLD) form a helical membrane-spanning segment. Over 279-315 (RMGYPILGQYSNGTAVSGIAYYFSTPYGISNIISDPL) the chain is Extracellular. Residues 316–335 (HAIFYTLMMVIFCILFGLFW) form a helical membrane-spanning segment. Topologically, residues 336–378 (VETSGLDAKSMAKKLGNLDMAIKGFRKSQKSIEQRLKRYIKPI) are cytoplasmic. A helical transmembrane segment spans residues 379–397 (TVMGSAFVGFLAAAADFTG). Residues 398–400 (ALG) are Extracellular-facing. Residues 401 to 415 (GGTGVLLTVSIVYRL) traverse the membrane as a helical segment. Over 416 to 438 (YEQLVQEQLSELHPAVAKFVGKR) the chain is Cytoplasmic.

This sequence belongs to the SecY/SEC61-alpha family. As to quaternary structure, component of the Sec protein translocase complex. Heterotrimer consisting of alpha (SecY), beta (SecG) and gamma (SecE) subunits. The heterotrimers can form oligomers, although 1 heterotrimer is thought to be able to translocate proteins. Interacts with the ribosome. May interact with SecDF, and other proteins may be involved.

The protein localises to the cell membrane. Its function is as follows. The central subunit of the protein translocation channel SecYEG. Consists of two halves formed by TMs 1-5 and 6-10. These two domains form a lateral gate at the front which open onto the bilayer between TMs 2 and 7, and are clamped together by SecE at the back. The channel is closed by both a pore ring composed of hydrophobic SecY resides and a short helix (helix 2A) on the extracellular side of the membrane which forms a plug. The plug probably moves laterally to allow the channel to open. The ring and the pore may move independently. In Methanococcus vannielii, this protein is Protein translocase subunit SecY.